The chain runs to 252 residues: Imidazole glycerol phosphate synthase subunit HisF (252 aa).

Residues Asp-11 and Asp-130 contribute to the active site.

It belongs to the HisA/HisF family. Heterodimer of HisH and HisF.

It is found in the cytoplasm. The catalysed reaction is 5-[(5-phospho-1-deoxy-D-ribulos-1-ylimino)methylamino]-1-(5-phospho-beta-D-ribosyl)imidazole-4-carboxamide + L-glutamine = D-erythro-1-(imidazol-4-yl)glycerol 3-phosphate + 5-amino-1-(5-phospho-beta-D-ribosyl)imidazole-4-carboxamide + L-glutamate + H(+). Its pathway is amino-acid biosynthesis; L-histidine biosynthesis; L-histidine from 5-phospho-alpha-D-ribose 1-diphosphate: step 5/9. Functionally, IGPS catalyzes the conversion of PRFAR and glutamine to IGP, AICAR and glutamate. The HisF subunit catalyzes the cyclization activity that produces IGP and AICAR from PRFAR using the ammonia provided by the HisH subunit. The protein is Imidazole glycerol phosphate synthase subunit HisF of Petrotoga mobilis (strain DSM 10674 / SJ95).